Consider the following 174-residue polypeptide: MGRIIFYEDKNFQGRRYECDSDCSDFHAFLNRCNSIRVESGAWVIYERPNFMGYQYVLTRGEYPDYQRWMGLNDRLCSCKMIHFVSGSEYKIQLYDKGDFTGQVYESTEDCPSVVDRFRTREVHSCKVLDGIWIFYEHPNYRGRQYLLEKGEYRKPVDWGAVCPTVQSFKRLME.

2 consecutive Beta/gamma crystallin 'Greek key' domains span residues 2-40 and 41-83; these read GRII…RVES and GAWV…KMIH. The connecting peptide stretch occupies residues 84–89; it reads FVSGSE. 2 consecutive Beta/gamma crystallin 'Greek key' domains span residues 90-130 and 131-173; these read YKIQ…KVLD and GIWI…KRLM.

The protein belongs to the beta/gamma-crystallin family.

Crystallins are the dominant structural components of the vertebrate eye lens. The sequence is that of Gamma-crystallin S (crygs) from Cyprinus carpio (Common carp).